Here is a 94-residue protein sequence, read N- to C-terminus: Pyrimidine/purine nucleoside phosphorylase (94 aa).

The protein belongs to the nucleoside phosphorylase PpnP family.

The catalysed reaction is a purine D-ribonucleoside + phosphate = a purine nucleobase + alpha-D-ribose 1-phosphate. The enzyme catalyses adenosine + phosphate = alpha-D-ribose 1-phosphate + adenine. It catalyses the reaction cytidine + phosphate = cytosine + alpha-D-ribose 1-phosphate. It carries out the reaction guanosine + phosphate = alpha-D-ribose 1-phosphate + guanine. The catalysed reaction is inosine + phosphate = alpha-D-ribose 1-phosphate + hypoxanthine. The enzyme catalyses thymidine + phosphate = 2-deoxy-alpha-D-ribose 1-phosphate + thymine. It catalyses the reaction uridine + phosphate = alpha-D-ribose 1-phosphate + uracil. It carries out the reaction xanthosine + phosphate = alpha-D-ribose 1-phosphate + xanthine. Catalyzes the phosphorolysis of diverse nucleosides, yielding D-ribose 1-phosphate and the respective free bases. Can use uridine, adenosine, guanosine, cytidine, thymidine, inosine and xanthosine as substrates. Also catalyzes the reverse reactions. The chain is Pyrimidine/purine nucleoside phosphorylase from Salmonella arizonae (strain ATCC BAA-731 / CDC346-86 / RSK2980).